The primary structure comprises 298 residues: Enoyl-CoA hydratase ACTT6 (298 aa).

It belongs to the enoyl-CoA hydratase/isomerase family.

It participates in mycotoxin biosynthesis. Its function is as follows. Enoyl-CoA hydratase; part of the gene clusters that mediate the biosynthesis of the host-selective toxins (HSTs) ACT-toxins responsible for brown spot of tangerine disease by the tangerine pathotype which affects tangerines and mandarins. ACT-toxins consist of three moieties, 9,10-epoxy-8-hydroxy-9-methyl-decatrienoic acid (EDA), valine and a polyketide. ACT-toxin I is toxic to both citrus and pear; toxin II the 5''-deoxy derivative of ACT-toxin I, is highly toxic to pear and slightly toxic to citrus. On cellular level, ACT-toxins affect plasma membrane of susceptible cells and cause a sudden increase in loss of K(+) after a few minutes of toxin treatment. The acyl-CoA ligase ACTT1, the hydrolase ACTT2, the enoyl-CoA hydratases ACTT3 and ACTT6, and the acyl-CoA synthetase ACTT5 are all involved in the biosynthesis of the AK-, AF- and ACT-toxin common 9,10-epoxy-8-hydroxy-9-methyl-decatrienoic acid (EDA) structural moiety. The exact role of each enzyme, and of additional enzymes identified within the AF-toxin clusters have still to be determined. On the other hand, ACTTS1 to ACTTS4 are specific to the tangerine pathotype. The function of ACTTS3 is to elongate the polyketide chain portion of ACT-toxin that is unique to this toxin. The enoyl-reductase ACTTS2 might complement the missing enoyl-reductase (ER) domain in ACTTS3 in the synthesis of the polyketide portion of ACT-toxin. The roles of the nonribosomal peptide synthetases-related proteins ACTTS1 and ACTTS4 have also still not been elucidated. This Alternaria alternata (Alternaria rot fungus) protein is Enoyl-CoA hydratase ACTT6.